The following is a 288-amino-acid chain: MAFRQALQLAACGLAGGSAAVLFSAVAVGKPRAGGDADTRTTEPLAWTGARPGHGVWDSNWDRREPLSLINLKKRNVEFGEDELASRLDHYKAKATRHIFLIRHSQYNVDGSMEKDRTLTPLGREQAELTGIRLASLGLKFNKIVHSSMTRAVETTDIISKHLPGVCRVSTDLLREGAPIEPDPPVSHWKPEAVQYYEDGARIEAAFRNYIHRADAKQEEDSYEIFICHANVIRYIVCRALQFPPEGWLRLSLNNGSITHLVIRPNGRVALRTLGDTGFMPPDKITRS.

Over 1–6 (MAFRQA) the chain is Mitochondrial matrix. Residues 7-29 (LQLAACGLAGGSAAVLFSAVAVG) traverse the membrane as a helical segment. At 30-288 (KPRAGGDADT…FMPPDKITRS (259 aa)) the chain is on the mitochondrial intermembrane side. An interaction with KEAP1 region spans residues 76 to 81 (NVEFGE). S86 bears the Phosphoserine mark. 3 positions are modified to N6-acetyllysine: K115, K143, and K190.

The protein belongs to the phosphoglycerate mutase family. BPG-dependent PGAM subfamily. As to quaternary structure, dimer. Forms a ternary complex with NFE2L2 and KEAP1. Interacts with BCL2L1 and MAP3K5. Upon TNF-induced necrosis, forms in complex with RIPK1, RIPK3 and MLKL; the formation of this complex leads to PGAM5 phosphorylation. Isoform 2, but not isoform 1, interacts with DNM1L; this interaction leads to DNM1L dephosphorylation and activation and eventually to mitochondria fragmentation. In terms of processing, phosphorylated by the RIPK1/RIPK3 complex under necrotic conditions. This phosphorylation increases PGAM5 phosphatase activity. Post-translationally, proteolytically cleaved by PARL in response to loss of mitochondrial membrane potential.

The protein localises to the mitochondrion outer membrane. Its subcellular location is the mitochondrion inner membrane. It catalyses the reaction O-phospho-L-seryl-[protein] + H2O = L-seryl-[protein] + phosphate. The enzyme catalyses O-phospho-L-threonyl-[protein] + H2O = L-threonyl-[protein] + phosphate. In terms of biological role, mitochondrial serine/threonine phosphatase that dephosphorylates various substrates and thus plays a role in different biological processes including cellular senescence or mitophagy. Modulates cellular senescence by regulating mitochondrial dynamics. Mechanistically, participates in mitochondrial fission through dephosphorylating DNM1L/DRP1. Additionally, dephosphorylates MFN2 in a stress-sensitive manner and consequently protects it from ubiquitination and degradation to promote mitochondrial network formation. Regulates mitophagy independent of PARKIN by interacting with and dephosphorylating FUNDC1, which interacts with LC3. Regulates anti-oxidative response by forming a tertiary complex with KEAP1 and NRF2. Regulates necroptosis by acting as a RIPK3 target and recruiting the RIPK1-RIPK3-MLKL necrosis 'attack' complex to mitochondria. This Rattus norvegicus (Rat) protein is Serine/threonine-protein phosphatase PGAM5, mitochondrial (Pgam5).